The chain runs to 488 residues: Malonate-semialdehyde dehydrogenase 2 (488 aa).

NAD(+)-binding residues include Phe155, Lys179, Glu182, Arg183, and Ser232. Residue Cys287 is the Nucleophile of the active site. Glu387 is an NAD(+) binding site.

This sequence belongs to the aldehyde dehydrogenase family. IolA subfamily. In terms of assembly, homotetramer.

The catalysed reaction is 3-oxopropanoate + NAD(+) + CoA + H2O = hydrogencarbonate + acetyl-CoA + NADH + H(+). It catalyses the reaction 2-methyl-3-oxopropanoate + NAD(+) + CoA + H2O = propanoyl-CoA + hydrogencarbonate + NADH + H(+). Its pathway is polyol metabolism; myo-inositol degradation into acetyl-CoA; acetyl-CoA from myo-inositol: step 7/7. In terms of biological role, catalyzes the oxidation of malonate semialdehyde (MSA) and methylmalonate semialdehyde (MMSA) into acetyl-CoA and propanoyl-CoA, respectively. Is involved in a myo-inositol catabolic pathway. Bicarbonate, and not CO2, is the end-product of the enzymatic reaction. This chain is Malonate-semialdehyde dehydrogenase 2, found in Bacillus cereus (strain ZK / E33L).